Reading from the N-terminus, the 359-residue chain is DNA polymerase IV (359 aa).

Residues 7–188 (IIHIDMDAFY…LPIGKFFGVG (182 aa)) form the UmuC domain. Mg(2+)-binding residues include Asp-11 and Asp-106. Glu-107 is a catalytic residue.

This sequence belongs to the DNA polymerase type-Y family. As to quaternary structure, monomer. Requires Mg(2+) as cofactor.

The protein localises to the cytoplasm. The enzyme catalyses DNA(n) + a 2'-deoxyribonucleoside 5'-triphosphate = DNA(n+1) + diphosphate. Its function is as follows. Poorly processive, error-prone DNA polymerase involved in untargeted mutagenesis. Copies undamaged DNA at stalled replication forks, which arise in vivo from mismatched or misaligned primer ends. These misaligned primers can be extended by PolIV. Exhibits no 3'-5' exonuclease (proofreading) activity. May be involved in translesional synthesis, in conjunction with the beta clamp from PolIII. The protein is DNA polymerase IV of Clostridium perfringens (strain SM101 / Type A).